The following is a 453-amino-acid chain: Trigger factor (453 aa).

In terms of domain architecture, PPIase FKBP-type spans 171–256 (GDRVTVSFKG…ATLVEAPKDT (86 aa)).

It belongs to the FKBP-type PPIase family. Tig subfamily.

The protein resides in the cytoplasm. It catalyses the reaction [protein]-peptidylproline (omega=180) = [protein]-peptidylproline (omega=0). Involved in protein export. Acts as a chaperone by maintaining the newly synthesized protein in an open conformation. Functions as a peptidyl-prolyl cis-trans isomerase. In Rhodopseudomonas palustris (strain BisA53), this protein is Trigger factor.